Here is a 392-residue protein sequence, read N- to C-terminus: Tryptophan synthase beta chain (392 aa).

The residue at position 86 (Lys86) is an N6-(pyridoxal phosphate)lysine.

Belongs to the TrpB family. As to quaternary structure, tetramer of two alpha and two beta chains. It depends on pyridoxal 5'-phosphate as a cofactor.

It carries out the reaction (1S,2R)-1-C-(indol-3-yl)glycerol 3-phosphate + L-serine = D-glyceraldehyde 3-phosphate + L-tryptophan + H2O. It participates in amino-acid biosynthesis; L-tryptophan biosynthesis; L-tryptophan from chorismate: step 5/5. In terms of biological role, the beta subunit is responsible for the synthesis of L-tryptophan from indole and L-serine. The protein is Tryptophan synthase beta chain of Methanocorpusculum labreanum (strain ATCC 43576 / DSM 4855 / Z).